Consider the following 76-residue polypeptide: ATP synthase subunit c (76 aa).

Transmembrane regions (helical) follow at residues 7–27 (VATALAVGLGAIGPGVGIGII) and 50–70 (FIGIAFTEALAIFGLVIAFLI).

Belongs to the ATPase C chain family. In terms of assembly, F-type ATPases have 2 components, F(1) - the catalytic core - and F(0) - the membrane proton channel. F(1) has five subunits: alpha(3), beta(3), gamma(1), delta(1), epsilon(1). F(0) has four main subunits: a(1), b(1), b'(1) and c(10-14). The alpha and beta chains form an alternating ring which encloses part of the gamma chain. F(1) is attached to F(0) by a central stalk formed by the gamma and epsilon chains, while a peripheral stalk is formed by the delta, b and b' chains.

The protein localises to the cell membrane. F(1)F(0) ATP synthase produces ATP from ADP in the presence of a proton or sodium gradient. F-type ATPases consist of two structural domains, F(1) containing the extramembraneous catalytic core and F(0) containing the membrane proton channel, linked together by a central stalk and a peripheral stalk. During catalysis, ATP synthesis in the catalytic domain of F(1) is coupled via a rotary mechanism of the central stalk subunits to proton translocation. Functionally, key component of the F(0) channel; it plays a direct role in translocation across the membrane. A homomeric c-ring of between 10-14 subunits forms the central stalk rotor element with the F(1) delta and epsilon subunits. The sequence is that of ATP synthase subunit c from Chloroflexus aurantiacus (strain ATCC 29366 / DSM 635 / J-10-fl).